Here is a 695-residue protein sequence, read N- to C-terminus: Pentatricopeptide repeat-containing protein 1, mitochondrial (695 aa).

PPR repeat units lie at residues 133–169, 170–204, 205–243, 244–278, 279–315, and 316–352; these read TQYW…RLQP, LECN…DLEP, SDAT…NFQL, NLKT…GHAV, TEET…GIKP, and SRHG…TILL. The interval 391 to 416 is disordered; the sequence is QKLEGPPALPEARVTSRTQPEVETTA. PPR repeat units follow at residues 470 to 485, 517 to 551, 552 to 583, and 584 to 618; these read EGFL…QPDI, DVTF…GIVP, NLRT…QVSP, and NIHI…SVPV. Residues 672–695 form a disordered region; that stretch reads WQEFQNKPVGDQDTTDKAGGLRDG. Positions 685-695 are enriched in basic and acidic residues; it reads TTDKAGGLRDG.

The protein belongs to the PTCD1 family. In terms of assembly, associates with mitochondrial leucine tRNAs. Interacts with ELAC2.

Its subcellular location is the mitochondrion. It localises to the mitochondrion matrix. Functionally, mitochondrial protein implicated in negative regulation of leucine tRNA levels, as well as negative regulation of mitochondria-encoded proteins and COX activity. Also affects the 3'-processing of mitochondrial tRNAs. In Mus musculus (Mouse), this protein is Pentatricopeptide repeat-containing protein 1, mitochondrial (Ptcd1).